We begin with the raw amino-acid sequence, 610 residues long: Solute carrier family 2, facilitated glucose transporter member 12 (610 aa).

The Cytoplasmic segment spans residues 1 to 49 (MDAPEESIRMTSDPQSKIYVQNPDTHIHLEQGPSAKSGNGRALVLCSVS). The helical transmembrane segment at 50–70 (VACLSGLLMGYEMSLISGALL) threads the bilayer. At 71-84 (QLRDVLTLSCPEQE) the chain is on the extracellular side. A helical transmembrane segment spans residues 85-105 (QVVGSLLLGAFLLSLGGGTIL). The Cytoplasmic segment spans residues 106 to 118 (DHYGRRFTIILTA). Residues 119–139 (LLCVLGTLLSVCVVSFWALVV) form a helical membrane-spanning segment. The Extracellular portion of the chain corresponds to 140–141 (GR). Residues 142–162 (MLVGMSVALSGTASCLYAAEV) form a helical membrane-spanning segment. Residues 163 to 176 (APAAWRGRCVCVYE) lie on the Cytoplasmic side of the membrane. The chain crosses the membrane as a helical span at residues 177-197 (LMVVLGMLLGFGLSWAFAGVP). Residues 198-201 (DGWR) lie on the Extracellular side of the membrane. A helical transmembrane segment spans residues 202-222 (FTFGGALLPALLQAGVMPLLP). The Cytoplasmic portion of the chain corresponds to 223-286 (DSPRFLLAQQ…FQSRDNMLQR (64 aa)). Residues 287–307 (LLVGAALVFLQQATGQPNILA) traverse the membrane as a helical segment. The Extracellular portion of the chain corresponds to 308-325 (YASTVLSSVGFHGNEAAT). Residues 326-346 (LASTGFGVVKVGGTIPAIFLV) traverse the membrane as a helical segment. Topologically, residues 347 to 353 (DKVGPKA) are cytoplasmic. The chain crosses the membrane as a helical span at residues 354–374 (LLCVGVVVMMLSTATLGAITM). The Extracellular portion of the chain corresponds to 375 to 475 (QSRTHVSSLC…LHEVSPSLKW (101 aa)). 3 N-linked (GlcNAc...) asparagine glycosylation sites follow: Asn-392, Asn-429, and Asn-438. The chain crosses the membrane as a helical span at residues 476–496 (ISLVSLLVYVAGFSISLGPMV). The Cytoplasmic segment spans residues 497 to 511 (HVVLSAIFPTGIRGK). A helical membrane pass occupies residues 512–532 (AVSVISAFNWATNLLISMTFL). Residues 533–542 (TLTERIGLPT) lie on the Extracellular side of the membrane. Residues 543–563 (VIFSYSAMSFLLVVFVIVFVP) form a helical membrane-spanning segment. At 564 to 610 (ETKGRSLEQISKELAMKNHLRGTLLCHRRKHKATAQPSQEEKALATV) the chain is on the cytoplasmic side.

The protein belongs to the major facilitator superfamily. Sugar transporter (TC 2.A.1.1) family. Glucose transporter subfamily. In terms of tissue distribution, expressed in the main insulin-sensitive tissues, such as cardiac muscle, skeletal muscle and adipose tissue.

It localises to the cell membrane. The protein localises to the endomembrane system. It is found in the cytoplasm. Its subcellular location is the perinuclear region. It carries out the reaction D-glucose(out) = D-glucose(in). Insulin-regulated facilitative glucose transporter. The protein is Solute carrier family 2, facilitated glucose transporter member 12 of Danio rerio (Zebrafish).